The chain runs to 60 residues: LKCHKLVPPFWKTCPEGKNLCYKMYMVSTLTVPVKRGCIDVCPKNSALVKYVCCNTNKCN.

4 cysteine pairs are disulfide-bonded: cysteine 3–cysteine 21, cysteine 14–cysteine 38, cysteine 42–cysteine 53, and cysteine 54–cysteine 59.

Belongs to the three-finger toxin family. Short-chain subfamily. Type IA cytotoxin sub-subfamily. In terms of assembly, monomer in solution; Homodimer and oligomer in the presence of negatively charged lipids forming a pore with a size ranging between 20 and 30 Angstroms. As to expression, expressed by the venom gland.

The protein resides in the secreted. Its subcellular location is the target cell membrane. Shows cytolytic activity on many different cells by forming pore in lipid membranes. In vivo, increases heart rate or kills the animal by cardiac arrest. In addition, it binds to heparin with high affinity, interacts with Kv channel-interacting protein 1 (KCNIP1) in a calcium-independent manner, and binds to integrin alpha-V/beta-3 (ITGAV/ITGB3) with moderate affinity. The polypeptide is Cytotoxin 8 (Naja annulifera (Banded Egyptian cobra)).